The sequence spans 1248 residues: Cullin-associated NEDD8-dissociated protein 1 (1248 aa).

HEAT repeat units lie at residues 44 to 82 (DESE…KVKE), 127 to 165 (PNVC…RFGE), 168 to 206 (VPFH…QANS), 365 to 403 (EDFY…NTRL), 425 to 463 (IEQL…SLPG), 510 to 548 (HPHI…VIRP), 604 to 642 (QNEL…LRID), 644 to 682 (TPIL…NYSS), 861 to 900 (DLSS…GSLQ), 976 to 1014 (LVNP…DQPQ), and 1054 to 1093 (PSLV…TVDD).

This sequence belongs to the CAND family.

Functionally, key assembly factor of SCF (SKP1-CUL1-F-box protein) E3 ubiquitin ligase complexes that promotes the exchange of the substrate-recognition F-box subunit in SCF complexes, thereby playing a key role in the cellular repertoire of SCF complexes. Acts as a F-box protein exchange factor. Probably plays a similar role in other cullin-RING E3 ubiquitin ligase complexes. The sequence is that of Cullin-associated NEDD8-dissociated protein 1 (Cand1) from Drosophila melanogaster (Fruit fly).